Reading from the N-terminus, the 585-residue chain is Mycosin-5 (585 aa).

The signal sequence occupies residues 1–39 (MQRFGTGSSRSWCGRAGTATIAAVLLASGALTGLPPAYA). The Peptidase S8 domain occupies 83–521 (PKYMEMLNLN…YGVVDPVAAL (439 aa)). Active-site charge relay system residues include Asp-109 and His-141. Residues 163-173 (VPRRPVTIPTT) show a composition bias toward low complexity. Residues 163–269 (VPRRPVTIPT…PALGPPPDAF (107 aa)) are disordered. Pro residues-rich tracts occupy residues 196–224 (PAPPPEEGVPPGAPVPGPEPPPAPGPQPP) and 252–267 (NPHPSAPSPALGPPPD). The active-site Charge relay system is the Ser-466. Residues 552–572 (VPIWVAAGGLAGALLIGGAVF) form a helical membrane-spanning segment.

Belongs to the peptidase S8 family.

Its subcellular location is the cell membrane. This chain is Mycosin-5, found in Mycobacterium tuberculosis (strain ATCC 25618 / H37Rv).